A 559-amino-acid chain; its full sequence is uncharacterized protein (559 aa).

Disordered regions lie at residues 315–360 (TDDA…ERDI) and 454–559 (DKID…STEN). Residues 320-329 (NENSDNSMNT) show a composition bias toward polar residues. Acidic residues predominate over residues 348–357 (DNNDDSDDSE). Residues 433-495 (ELKIQEMEKI…KRRQKRSQRS (63 aa)) adopt a coiled-coil conformation. A compositionally biased stretch (basic and acidic residues) spans 454-501 (DKIDMDQIKSEMSRRRDESNKRRDEKRKDREEKRRQKRSQRSDTRKQG). Positions 507–527 (SDEATSDQTQSTDSNNTTQTA) are enriched in low complexity.

The protein resides in the virion. This is an uncharacterized protein from Acanthamoeba polyphaga mimivirus (APMV).